The chain runs to 866 residues: MAAFPAYLALLSYLVPGALSHPEAKTLTSRASTEAYSPPYYPAPNGGWISEWASAYEKAHRVVSNMTLAEKVNLTSGTGIYMGPCAGQTGSVPRFGIPNLCLHDSPLGVRNSDHNTAFPAGITVGATFDKDLMYERGVGLGEEARGKGINVLLGPSVGPIGRKPRGGRNWEGFGADPSLQAFGGSLTIKGMQSTGAIASLKHLIGNEQEQHRMSSVITQGYSSNIDDRTLHELYLWPFAESVRAGAGSVMIAYNDVNRSACSQNSKLINGILKDELGFQGFVVTDWLAHIGGVSSALAGLDMSMPGDGAIPLLGTSYWSWELSRSVLNGSVPVERLNDMVTRIVATWYKMGQDKDYPLPNFSSNTEDETGPLYPGALFSPSGIVNQYVNVQGNHNVTARAIARDAITLLKNNDNVLPLKRNNTLKIFGTDAGTNSDGINSCTDKGCNKGVLTMGWGSGTSRLPYLITPQEAIANISSNAGFHITDTFPSGVTAGPDDIAIVFINSDSGENYITVDGNPGDRTLAGLHAWHNGDNLVKAAAEKFSNVVVVVHTVGPILMEEWIDLDSVKAVLVAHLPGQEAGWSLTDILFGDYSPSGHLPYTIPHSESDYPESVGLIAQPFGQIQDDYTEGLYIDYRHFLKANITPRYPFGHGLSYTTFNFTEPNLSIIKALDTAYPAARPPKGSTPTYPTAKPDASEVAWPKNFNRIWRYLYPYLDNPEGAAANSSKTYPYPDGYTTEPKPAPRAGGAEGGNPALWDVTFSVQVKVTNTGSRDGRAVAQLYVELPSSLGLDTPSRQLRQFEKTKILAAGESEVLTLDVTRKDLSVWDVVVQDWKAPVNGEGVKIWVGESVADLRVGCVVGEGCSTL.

The first 20 residues, 1-20, serve as a signal peptide directing secretion; it reads MAAFPAYLALLSYLVPGALS. Residues Asn-65, Asn-73, and Asn-257 are each glycosylated (N-linked (GlcNAc...) asparagine). Asp-285 is an active-site residue. N-linked (GlcNAc...) asparagine glycosylation is found at Asn-328, Asn-360, Asn-395, Asn-421, Asn-474, Asn-659, Asn-664, and Asn-724. The tract at residues 725-748 is disordered; the sequence is SSKTYPYPDGYTTEPKPAPRAGGA.

This sequence belongs to the glycosyl hydrolase 3 family.

It localises to the secreted. It catalyses the reaction Hydrolysis of terminal, non-reducing beta-D-glucosyl residues with release of beta-D-glucose.. The protein operates within glycan metabolism; cellulose degradation. Functionally, beta-glucosidases are one of a number of cellulolytic enzymes involved in the degradation of cellulosic biomass. Catalyzes the last step releasing glucose from the inhibitory cellobiose. In Aspergillus flavus (strain ATCC 200026 / FGSC A1120 / IAM 13836 / NRRL 3357 / JCM 12722 / SRRC 167), this protein is Probable beta-glucosidase F (bglF).